An 88-amino-acid polypeptide reads, in one-letter code: uncharacterized protein (88 aa).

The next 2 helical transmembrane spans lie at 13–33 (FLAF…GWGP) and 62–82 (WFNI…ITGI).

It localises to the cell membrane. This is an uncharacterized protein from Bacillus subtilis (strain 168).